Consider the following 63-residue polypeptide: MASVAESSGVVEVIELISDGGNDLPRKIMSGRHGGICPRILMPCKTDDDCMLDCRCLSNGYCG.

The first 21 residues, 1–21, serve as a signal peptide directing secretion; the sequence is MASVAESSGVVEVIELISDGG. The propeptide occupies 22–34; sequence NDLPRKIMSGRHG. 3 cysteine pairs are disulfide-bonded: Cys-37-Cys-54, Cys-44-Cys-56, and Cys-50-Cys-62.

Belongs to the protease inhibitor I7 (squash-type serine protease inhibitor) family.

It is found in the secreted. Its function is as follows. Inhibits trypsin. This Luffa aegyptiaca (Sponge gourd) protein is Trypsin inhibitor 5.